Reading from the N-terminus, the 846-residue chain is Outer membrane channel protein CpnT (846 aa).

The interval 1 to 443 (MAPLAVDPAA…AGVRGLKERL (443 aa)) is NTD. The segment at 442 to 630 (RLEPTTPHLE…SGSEPPGLHA (189 aa)) is disordered. Pro residues-rich tracts occupy residues 450 to 466 (LEPPATPPRPGPQPPRI) and 475 to 504 (APAPAAKPAPVPANGPLPHSPTESKPPPVD). Low complexity-rich tracts occupy residues 508 to 517 (EPVAPSSASA) and 562 to 586 (APATAHQPQWATTPAAPAAAPHSTP). A TNT region spans residues 651–846 (RLSDEAVDPQ…ELIRRGVLRQ (196 aa)). One can recognise a TNT domain in the interval 751–846 (YGPQLDRIGG…ELIRRGVLRQ (96 aa)). R757 is an active-site residue. Position 780 (R780) interacts with NAD(+). Q822 is an active-site residue.

As to quaternary structure, interacts with the immunity factor for TNT (IFT) homolog. Post-translationally, the C-terminal domain (TNT) is probably cleaved.

It localises to the cell outer membrane. The protein resides in the secreted. It is found in the cell surface. It catalyses the reaction NAD(+) + H2O = ADP-D-ribose + nicotinamide + H(+). Glycohydrolase activity is completely inhibited by interaction with the immunity factor for TNT (IFT) homolog. This inhibition protects M.bovis from self-poisoning. In terms of biological role, the N-terminal domain (NTD) forms an outer membrane channel and is used for uptake of nutrients across the outer membrane. Also confers susceptibility to structurally different antibiotics and antituberculosis drugs, and to toxic immune factors such as nitric oxide (NO). The C-terminal domain (TNT) is dispensable for normal growth in macrophages. In Mycobacterium bovis (strain BCG / Pasteur 1173P2), this protein is Outer membrane channel protein CpnT.